The primary structure comprises 284 residues: Probable ADP-ribose 1''-phosphate phosphatase YML087W (284 aa).

Asp-23, Gln-55, Asn-80, and Asp-90 together coordinate substrate. The 197-residue stretch at 34–230 (ESIPHAYIQN…HISKELKNVL (197 aa)) folds into the Macro domain. Active-site residues include Asn-80 and Asp-90. Cys-128 and Cys-136 are oxidised to a cystine. His-145 is an active-site residue. Residues Thr-148 and Thr-195 each contribute to the substrate site.

Homodimer.

The catalysed reaction is ADP-alpha-D-ribose 1''-phosphate + H2O = ADP-D-ribose + phosphate. Functionally, highly specific phosphatase involved in the metabolism of ADP-ribose 1''-phosphate (Appr1p) which is produced as a consequence of tRNA splicing. + phosphate. This Saccharomyces cerevisiae (strain ATCC 204508 / S288c) (Baker's yeast) protein is Probable ADP-ribose 1''-phosphate phosphatase YML087W.